The primary structure comprises 566 residues: MSADCSVGSNPLAQLNKHAQQNPALRQVGYQNPASNVAQNFKTHVNEVSNANRFQMDQFMNRSPGFSDGQLGMAPVPSAILSHGPRFGLKKQDSGSSNMSAGDTAQHSRSWGNEFNSRSPQQGLASRVNNVERISNTNSMSSYRPGMSRIGRPMMHTGISSLHNYSHMSQQTPQMSSDDGVLADKQWNEQFEALEKAVAENLTMEDNKEETKEEIVVEDGYQADFQEVWDKLQAETADNNLETSDSQWEKDYARYMTGKATHIPPYRFDNDNQYMHNPNAYEIGCILMENGAKLSEAALAFEAAVQEDPAHVDAWLKLGLVQTQNEKEMNGISALEQCLSLDPTNQQALMTISISYINEGYDLTAFSMLNRWLDSKYPELTRSPTIDEANIDRFNLSKQVITKYLQVANALPQVDPEVQLGLGTLFYANEEFGKTIDCFRTALEVNPNDELMWNRLGASLANSNRSEEAIQAYHKALALKPSFVRARYNLAISSMNIGCYKEAAESLLSALSMHEVENVPITGSVVQSNNILETLKRSFVAMDRRDLLEKVMPGMDLQQFRNEFNF.

C5 is covalently cross-linked (Glycyl cysteine thioester (Cys-Gly) (interchain with G-Cter in ubiquitin)). Residues 6–28 form an amphipathic helix 1 (AH1) region; sequence SVGSNPLAQLNKHAQQNPALRQV. Residue K17 forms a Glycyl lysine isopeptide (Lys-Gly) (interchain with G-Cter in ubiquitin) linkage. The tract at residues 53–71 is amphipathic helix 2 (AH2); that stretch reads RFQMDQFMNRSPGFSDGQL. A disordered region spans residues 88 to 159; that stretch reads GLKKQDSGSS…IGRPMMHTGI (72 aa). The span at 94-142 shows a compositional bias: polar residues; sequence SGSSNMSAGDTAQHSRSWGNEFNSRSPQQGLASRVNNVERISNTNSMSS. Residues 111–115 carry the WxxxF/Y motif 1 motif; sequence WGNEF. The interval 145 to 151 is amphipathic helix 3 (AH3); it reads PGMSRIG. A WxxxF/Y motif 2 motif is present at residues 187–191; sequence WNEQF. The amphipathic helix 4 (AH4) stretch occupies residues 225-241; the sequence is FQEVWDKLQAETADNNL. The short motif at 248 to 252 is the WxxxF/Y motif 3 element; it reads WEKDY. 5 TPR repeats span residues 277–311, 312–345, 416–449, 451–483, and 485–517; these read NPNA…DPAH, VDAW…DPTN, PEVQ…NPND, LMWN…KPSF, and RARY…HEVE.

It belongs to the peroxisomal targeting signal receptor family. Interacts (via WxxxF/Y and LVxEF motifs) with PEX14; promoting translocation through the PEX13-PEX14 docking complex. Post-translationally, monoubiquitinated at Cys-5 by PEX2 during PEX5 passage through the retrotranslocation channel: monoubiquitination acts as a signal for PEX5 extraction and is required for proper export from peroxisomes and recycling. When PEX5 recycling is compromised, polyubiquitinated at Lys-17 by PEX10 during its passage through the retrotranslocation channel, leading to its degradation.

The protein resides in the cytoplasm. It localises to the cytosol. The protein localises to the peroxisome matrix. Functionally, receptor that mediates peroxisomal import of proteins containing a C-terminal PTS1-type tripeptide peroxisomal targeting signal (SKL-type). Binds to cargo proteins containing a PTS1 peroxisomal targeting signal in the cytosol, and translocates them into the peroxisome matrix by passing through the PEX13-PEX14 docking complex along with cargo proteins. PEX5 receptor is then retrotranslocated into the cytosol, leading to release of bound cargo in the peroxisome matrix, and reset for a subsequent peroxisome import cycle. The sequence is that of Peroxisomal targeting signal receptor (PEX5) from Kluyveromyces lactis (strain ATCC 8585 / CBS 2359 / DSM 70799 / NBRC 1267 / NRRL Y-1140 / WM37) (Yeast).